The primary structure comprises 25 residues: Brevinin-2R (25 aa).

Cys-19 and Cys-25 are disulfide-bonded.

The protein belongs to the frog skin active peptide (FSAP) family. Brevinin subfamily. In terms of tissue distribution, expressed by the skin glands.

It is found in the secreted. In terms of biological role, cytotoxic to cancer cells, acts via the activation of the lysosomal-mitochondrial death pathway and autophagy-like cell death. Does not show significant hemolytic activity. This Pelophylax ridibundus (Marsh frog) protein is Brevinin-2R.